The primary structure comprises 189 residues: GMP synthase [glutamine-hydrolyzing] subunit A (189 aa).

Residues 5–189 (KILVVNNYGQ…TNFFEVCDRY (185 aa)) form the Glutamine amidotransferase type-1 domain. Cys79 (nucleophile) is an active-site residue. Active-site residues include His166 and Glu168.

Heterodimer composed of a glutamine amidotransferase subunit (A) and a GMP-binding subunit (B).

It carries out the reaction XMP + L-glutamine + ATP + H2O = GMP + L-glutamate + AMP + diphosphate + 2 H(+). It functions in the pathway purine metabolism; GMP biosynthesis; GMP from XMP (L-Gln route): step 1/1. In terms of biological role, catalyzes the synthesis of GMP from XMP. This Methanosarcina acetivorans (strain ATCC 35395 / DSM 2834 / JCM 12185 / C2A) protein is GMP synthase [glutamine-hydrolyzing] subunit A.